A 119-amino-acid chain; its full sequence is Small ribosomal subunit protein bS16 (119 aa).

Belongs to the bacterial ribosomal protein bS16 family.

The chain is Small ribosomal subunit protein bS16 from Amoebophilus asiaticus (strain 5a2).